Consider the following 224-residue polypeptide: ATP-dependent dethiobiotin synthetase BioD (224 aa).

12 to 17 (EVGKTV) contributes to the ATP binding site. Position 16 (Thr-16) interacts with Mg(2+). Residue Lys-34 is part of the active site. Thr-38 serves as a coordination point for substrate. ATP contacts are provided by residues Asp-47, 106–109 (EGAG), 166–167 (GS), and 196–198 (PEG). Mg(2+) is bound by residues Asp-47 and Glu-106.

Belongs to the dethiobiotin synthetase family. As to quaternary structure, homodimer. The cofactor is Mg(2+).

It is found in the cytoplasm. The enzyme catalyses (7R,8S)-7,8-diammoniononanoate + CO2 + ATP = (4R,5S)-dethiobiotin + ADP + phosphate + 3 H(+). Its pathway is cofactor biosynthesis; biotin biosynthesis; biotin from 7,8-diaminononanoate: step 1/2. Its function is as follows. Catalyzes a mechanistically unusual reaction, the ATP-dependent insertion of CO2 between the N7 and N8 nitrogen atoms of 7,8-diaminopelargonic acid (DAPA, also called 7,8-diammoniononanoate) to form a ureido ring. This chain is ATP-dependent dethiobiotin synthetase BioD, found in Saccharopolyspora erythraea (strain ATCC 11635 / DSM 40517 / JCM 4748 / NBRC 13426 / NCIMB 8594 / NRRL 2338).